The primary structure comprises 2319 residues: Neurogenic locus notch homolog protein 3 (2319 aa).

A compositionally biased stretch (basic residues) spans 1–14; that stretch reads MGPGARGRRRRRRL. The segment at 1-20 is disordered; sequence MGPGARGRRRRRRLMALPPP. The first 40 residues, 1-40, serve as a signal peptide directing secretion; that stretch reads MGPGARGRRRRRRLMALPPPPPPMRALPLLLLLLAGLGAA. EGF-like domains follow at residues 41–79, 80–120, and 121–158; these read APPC…ERCQ, LEDP…PDCS, and LPDP…RNCR. Topologically, residues 41 to 1645 are extracellular; that stretch reads APPCLDGSPC…LEPPEQSVPL (1605 aa). 99 disulfide bridges follow: Cys44-Cys56, Cys50-Cys67, Cys69-Cys78, Cys84-Cys95, Cys89-Cys108, Cys110-Cys119, Cys125-Cys136, Cys130-Cys146, Cys148-Cys157, Cys164-Cys176, Cys170-Cys185, Cys187-Cys196, Cys203-Cys214, Cys208-Cys224, Cys226-Cys235, Cys242-Cys253, Cys247-Cys262, Cys264-Cys273, Cys280-Cys293, Cys287-Cys302, Cys304-Cys313, Cys320-Cys331, Cys325-Cys340, Cys342-Cys351, Cys357-Cys368, Cys362-Cys379, Cys381-Cys390, Cys397-Cys410, Cys404-Cys419, Cys421-Cys430, Cys437-Cys448, Cys442-Cys457, Cys459-Cys468, Cys475-Cys486, Cys480-Cys495, Cys497-Cys506, Cys513-Cys524, Cys518-Cys533, Cys535-Cys544, Cys551-Cys561, Cys556-Cys570, Cys572-Cys581, Cys588-Cys599, Cys593-Cys608, Cys610-Cys619, Cys626-Cys636, Cys631-Cys645, Cys647-Cys656, Cys663-Cys674, Cys668-Cys683, Cys685-Cys694, Cys701-Cys711, Cys706-Cys720, Cys722-Cys731, Cys740-Cys751, Cys745-Cys760, Cys762-Cys771, Cys777-Cys788, Cys782-Cys798, Cys800-Cys809, Cys816-Cys828, Cys822-Cys837, Cys839-Cys848, Cys855-Cys866, Cys860-Cys875, Cys877-Cys886, Cys893-Cys903, Cys898-Cys912, Cys914-Cys923, Cys930-Cys941, Cys935-Cys950, Cys952-Cys961, Cys968-Cys979, Cys973-Cys988, Cys990-Cys999, Cys1006-Cys1017, Cys1011-Cys1024, Cys1026-Cys1035, Cys1042-Cys1063, Cys1057-Cys1072, Cys1074-Cys1083, Cys1090-Cys1101, Cys1095-Cys1110, Cys1112-Cys1121, Cys1128-Cys1139, Cys1133-Cys1148, Cys1150-Cys1159, Cys1166-Cys1184, Cys1178-Cys1193, Cys1195-Cys1204, Cys1211-Cys1224, Cys1216-Cys1234, Cys1236-Cys1245, Cys1252-Cys1263, Cys1257-Cys1277, Cys1279-Cys1288, Cys1295-Cys1306, Cys1300-Cys1315, and Cys1317-Cys1326. An EGF-like 4; calcium-binding domain is found at 160–197; it reads DIDECRAGASCRHGGTCINTPGSFHCLCPLGYTGLLCE. The 38-residue stretch at 199-236 folds into the EGF-like 5 domain; it reads PIVPCAPSPCRNGGTCRQSSDVTYDCACLPGFEGQNCE. One can recognise an EGF-like 6; calcium-binding domain in the interval 238-274; the sequence is NVDDCPGHRCLNGGTCVDGVNTYNCQCPPEWTGQFCT. In terms of domain architecture, EGF-like 7 spans 276 to 314; the sequence is DVDECQLQPNACHNGGTCFNLLGGHSCVCVNGWTGESCS. An EGF-like 8; calcium-binding domain is found at 316–352; sequence NIDDCATAVCFHGATCHDRVASFYCACPMGKTGLLCH. The region spanning 353–391 is the EGF-like 9 domain; it reads LDDACVSNPCHEDAICDTNPVSGRAICTCPPGFTGGACD. The EGF-like 10; calcium-binding domain occupies 393 to 431; that stretch reads DVDECSIGANPCEHLGRCVNTQGSFLCQCGRGYTGPRCE. The region spanning 433–469 is the EGF-like 11; calcium-binding domain; it reads DVNECLSGPCRNQATCLDRIGQFTCICMAGFTGTFCE. An EGF-like 12; calcium-binding domain is found at 471–507; sequence DIDECQSSPCVNGGVCKDRVNGFSCTCPSGFSGSTCQ. The 37-residue stretch at 509-545 folds into the EGF-like 13; calcium-binding domain; the sequence is DVDECASTPCRNGAKCVDQPDGYECRCAEGFEGTLCE. The EGF-like 14; calcium-binding domain maps to 547 to 582; that stretch reads NVDDCSPDPCHHGRCVDGIASFSCACAPGYTGIRCE. Residues 584-620 enclose the EGF-like 15; calcium-binding domain; that stretch reads QVDECRSQPCRYGGKCLDLVDKYLCRCPPGTTGVNCE. The EGF-like 16; calcium-binding domain maps to 622-657; that stretch reads NIDDCASNPCTFGVCRDGINRYDCVCQPGFTGPLCN. In terms of domain architecture, EGF-like 17; calcium-binding spans 659–695; sequence EINECASSPCGEGGSCVDGENGFHCLCPPGSLPPLCL. 3 EGF-like domains span residues 697–732, 736–772, and 773–810; these read ANHP…PRCS, APDA…HQCE, and VLSP…PRCQ. The 38-residue stretch at 812–849 folds into the EGF-like 21; calcium-binding domain; it reads DVDECAGASPCGPHGTCTNLPGSFRCICHGGYTGPFCD. The 37-residue stretch at 851–887 folds into the EGF-like 22; calcium-binding domain; sequence DIDDCDPNPCLNGGSCQDGVGSFSCSCLSGFAGPRCA. Residues 889 to 924 form the EGF-like 23; calcium-binding domain; sequence DVDECLSSPCGPGTCTDHVASFTCTCPPGYGGFHCE. 5 EGF-like domains span residues 926–962, 964–1000, 1002–1036, 1038–1084, and 1086–1122; these read DLLD…THCQ, KVDP…NQCQ, PVDW…PLCD, PSLP…SHCE, and EVDP…DSCE. Residues 1124–1160 enclose the EGF-like 29; calcium-binding domain; that stretch reads DVDECASQPCQNGGSCIDLVAHYLCSCPPGTLGVLCE. Residues 1162-1205 form the EGF-like 30; calcium-binding domain; sequence NEDDCGPGPSLDSGLRCLHNGTCVDLVGGFRCNCPPGYTGLHCE. The N-linked (GlcNAc...) asparagine glycan is linked to Asn1181. 4 consecutive EGF-like domains span residues 1207–1246, 1248–1289, 1291–1327, and 1337–1375; these read DINE…PRCQ, ALFP…LRCE, VARS…PSCR, and TNTS…PRCE. An N-linked (GlcNAc...) asparagine glycan is attached at Asn1338. Intrachain disulfides connect Cys1341-Cys1352, Cys1346-Cys1363, Cys1365-Cys1374, Cys1389-Cys1412, Cys1394-Cys1407, Cys1403-Cys1419, Cys1430-Cys1453, Cys1435-Cys1448, Cys1444-Cys1460, Cys1469-Cys1495, Cys1477-Cys1490, and Cys1486-Cys1502. 3 LNR repeats span residues 1389–1429, 1430–1467, and 1469–1507; these read CPRA…PWRQ, CEAL…GRDR, and CNPV…SEVP. Asn1440 carries N-linked (GlcNAc...) asparagine glycosylation. Residues 1646-1666 traverse the membrane as a helical segment; that stretch reads LPLLVAGAVFLLVIFVLGVMV. The Cytoplasmic portion of the chain corresponds to 1667–2319; that stretch reads ARRKREHSTL…EVTPKRQVMA (653 aa). 5 ANK repeats span residues 1840–1869, 1873–1903, 1907–1936, 1940–1969, and 1973–2002; these read TGET…DTNA, SGRT…DLDA, DGST…DVNA, LGKS…NKDM, and KEET…NREI. Disordered regions lie at residues 2026 to 2046 and 2059 to 2129; these read LDQP…PLLC and QSGT…EGPY. Low complexity predominate over residues 2029-2046; it reads PSGPRSPSGPHGLGPLLC. Position 2175 is an omega-N-methylarginine (Arg2175). Positions 2197 to 2319 are disordered; sequence LNPATPVSPH…EVTPKRQVMA (123 aa). Low complexity predominate over residues 2263–2288; the sequence is SLSDWSDSTPSPATATSATAAGALPA. Residues 2297-2306 show a composition bias toward polar residues; that stretch reads SLPQSQTQLG.

This sequence belongs to the NOTCH family. In terms of assembly, heterodimer of a C-terminal fragment N(TM) and a N-terminal fragment N(EC) which are probably linked by disulfide bonds. Interacts with MAML1, MAML2 and MAML3 which act as transcriptional coactivators for NOTCH3. Interacts with PSMA1. Interacts with HIF1AN. In terms of processing, synthesized in the endoplasmic reticulum as an inactive form which is proteolytically cleaved by a furin-like convertase in the trans-Golgi network before it reaches the plasma membrane to yield an active, ligand-accessible form. Cleavage results in a C-terminal fragment N(TM) and a N-terminal fragment N(EC). Following ligand binding, it is cleaved by TNF-alpha converting enzyme (TACE) to yield a membrane-associated intermediate fragment called notch extracellular truncation (NEXT). This fragment is then cleaved by presenilin dependent gamma-secretase to release a notch-derived peptide containing the intracellular domain (NICD) from the membrane. Post-translationally, phosphorylated. Hydroxylated by HIF1AN. As to expression, expressed in postnatal central nervous system (CNS) germinal zones and, in early postnatal life, within numerous cells throughout the CNS. It is more highly localized to ventricular germinal zones.

The protein localises to the cell membrane. It is found in the nucleus. In terms of biological role, functions as a receptor for membrane-bound ligands Jagged1, Jagged2 and Delta1 to regulate cell-fate determination. Upon ligand activation through the released notch intracellular domain (NICD) it forms a transcriptional activator complex with RBPJ/RBPSUH and activates genes of the enhancer of split locus. Affects the implementation of differentiation, proliferation and apoptotic programs. Acts instructively to control the cell fate determination of CNS multipotent progenitor cells, resulting in astroglial induction and neuron/oligodendrocyte suppression. The polypeptide is Neurogenic locus notch homolog protein 3 (Notch3) (Rattus norvegicus (Rat)).